The chain runs to 144 residues: Snaclec trimecetin subunit beta (144 aa).

The signal sequence occupies residues 1–23 (MGRFIFVSFGLLVVFLSLSGTAA). Disulfide bonds link C25/C36, C53/C142, and C119/C134. In terms of domain architecture, C-type lectin spans 32 to 143 (FRRYCYQVFQ…CSSKRYVVCK (112 aa)).

The protein belongs to the snaclec family. As to quaternary structure, heterodimer of subunits alpha and beta; disulfide-linked. In terms of tissue distribution, expressed by the venom gland.

Its subcellular location is the secreted. Functionally, snaclec that induces platelet aggregation in either human platelet rich plasma (PRP) or washed platelet suspensions. It causes aggregation in a dose-dependent manner even in the absence of various platelet agonists such as ADP or von Willebrand factor (vWF). Interestingly, it does not induce aggregation in rabbit PRP. A monoclonal antibody against the platelet GPIb receptor blocks the aggregation induced by trimecetin, suggesting that it acts by binding to GPIb (GP1BA/GP1BB). The protein is Snaclec trimecetin subunit beta of Protobothrops mucrosquamatus (Taiwan habu).